The following is a 290-amino-acid chain: Small ribosomal subunit biogenesis GTPase RsgA (290 aa).

The 158-residue stretch at 61 to 218 (SSELLRPAVA…IVDTPGFSTL (158 aa)) folds into the CP-type G domain. Residues 110–113 (NKVD) and 161–169 (GPSGAGKST) contribute to the GTP site. The Zn(2+) site is built by Cys-243, Cys-248, His-250, and Cys-256.

This sequence belongs to the TRAFAC class YlqF/YawG GTPase family. RsgA subfamily. In terms of assembly, monomer. Associates with 30S ribosomal subunit, binds 16S rRNA. Requires Zn(2+) as cofactor.

The protein resides in the cytoplasm. Its function is as follows. One of several proteins that assist in the late maturation steps of the functional core of the 30S ribosomal subunit. Helps release RbfA from mature subunits. May play a role in the assembly of ribosomal proteins into the subunit. Circularly permuted GTPase that catalyzes slow GTP hydrolysis, GTPase activity is stimulated by the 30S ribosomal subunit. The sequence is that of Small ribosomal subunit biogenesis GTPase RsgA from Clostridium botulinum (strain Eklund 17B / Type B).